A 316-amino-acid polypeptide reads, in one-letter code: Oligopeptide transport system permease protein AppB (316 aa).

A run of 6 helical transmembrane segments spans residues 10-30 (LMSIPILLGITILSFVIMKAA), 100-120 (LLLMLVSTILALMISIPFGVL), 138-158 (FIGLAIPNFWFGLILIMVLSV), 177-197 (IFDRIHHLILPAFVLATADMA), 240-260 (LPVITIFGLMIPSFIGGSVVV), and 290-310 (VISAVLVVVGNLIADILYAIV). In terms of domain architecture, ABC transmembrane type-1 spans 96-303 (LPNTLLLMLV…VLVVVGNLIA (208 aa)).

This sequence belongs to the binding-protein-dependent transport system permease family. OppBC subfamily.

It is found in the cell membrane. This protein is a component of an oligopeptide permease, a binding protein-dependent transport system. This APP system can completely substitute for the OPP system in both sporulation and genetic competence, though, unlike OPP, is incapable of transporting tripeptides. Probably responsible for the translocation of the substrate across the membrane. This chain is Oligopeptide transport system permease protein AppB (appB), found in Bacillus subtilis (strain 168).